A 764-amino-acid chain; its full sequence is Subtilisin-like protease SBT1.6 (764 aa).

The signal sequence occupies residues 1-20 (MASSTIVLLLFLSFPFISFA). The region spanning 46–99 (HWYSTEFAEESRIVHVYHTVFHGFSAVVTPDEADNLRNHPAVLAVFEDRRRELH) is the Inhibitor I9 domain. One can recognise a Peptidase S8 domain in the interval 103 to 606 (SPQFLGLQNQ…SGHLNLGRAM (504 aa)). The active-site Charge relay system is aspartate 131. The N-linked (GlcNAc...) asparagine glycan is linked to asparagine 191. Histidine 205 serves as the catalytic Charge relay system. Residues 377–457 (SSASLCMENT…NEGDRIKAYA (81 aa)) form the PA domain. Serine 538 serves as the catalytic Charge relay system. N-linked (GlcNAc...) asparagine glycosylation is present at asparagine 578.

Belongs to the peptidase S8 family. Expressed in roots, leaves and flowers of mature plants.

In Arabidopsis thaliana (Mouse-ear cress), this protein is Subtilisin-like protease SBT1.6.